The primary structure comprises 2167 residues: RNA editing associated helicase 2 (2167 aa).

The N-terminal 30 residues, 1–30, are a transit peptide targeting the mitochondrion; it reads MRAIRLTVACRYLGPFRSVTLSPVVLPVRL. Disordered stretches follow at residues 503–593 and 937–969; these read RARG…DEAT and ENATKPPHTPTPLPLTLGTTQEKPQYPTPPTNV. The segment covering 532-541 has biased composition (low complexity); sequence SSTQTPSSST. Positions 1024-1095 constitute a DRBM domain; that stretch reads DAKTVLQRYC…AMHALALLRR (72 aa). Residues 1348-1513 form the Helicase ATP-binding domain; it reads LRAISSNQIV…FGNAPIINVE (166 aa). Residue 1361-1368 coordinates ATP; the sequence is GTTGCGKT. The Important for binding to gRNA signature appears at 1366 to 1367; sequence GK. Residues 1460-1463 carry the DEAH box motif; the sequence is DEIH. In terms of domain architecture, Helicase C-terminal spans 1585 to 1762; that stretch reads AIDHAVRSLD…SLCLQILALD (178 aa). A disordered region spans residues 2132–2167; it reads IIEPCTEPKGGSSEAEKTHVNSSHTPTTSAEAGGDS. Residues 2151–2161 are compositionally biased toward polar residues; that stretch reads VNSSHTPTTSA.

It belongs to the DEAD box helicase family. DEAH subfamily. Component of the REH2-associated complex (REH2C) composed of helicase REH2, associated factors H2F1 and H2F2, and mRNAs at various editing stages; the formation of the complex is RNA-independent. Within the complex, interacts with H2F1; the interaction is direct. Interacts transiently, in a RNA-dependent manner, with various editing complexes including the RNA editing core (RECC) complex, the gRNA-binding (GRBC) complex (also known as the MRB1 complex) and the RNA editing mediator (REMC) complex. Interacts with GAP1/GRBC2 via RNA forming a variant of the GRBC complex known as REH2-GRBC complex. Interacts with mitochondrial ribosomes.

It is found in the mitochondrion. It carries out the reaction ATP + H2O = ADP + phosphate + H(+). ATP-dependent RNA helicase that unwinds RNA in a 3' to 5' direction and that plays an important role in mitochondrial mRNA editing, a process involving the addition and deletion of uridine (U) nucleotides in the pre-mRNA. As part of the RET2-containing gRNA-binding (RET2-GRBC) complex, acts as a scaffold for the assembly of mRNA-gRNA hybrids and the recruitment of the RNA editing core (RECC) complex. Regulates several steps of mRNA editing by the MRBC3010/GRBC6 containing gRNA-binding (MRBC3010-GRBC) complex including loading of unedited mRNA, editing in the first sequence block and subsequent editing progression across multiple sequence blocks. Also, regulates the RNA substrate content of the MRBC3010-GRBC complex as well as the association of this complex with mitoribosomes. The protein is RNA editing associated helicase 2 of Trypanosoma brucei brucei (strain 927/4 GUTat10.1).